Consider the following 227-residue polypeptide: Cytochrome c oxidase subunit 2 (227 aa).

At 1–14 (MAYPFELGFQDATS) the chain is on the mitochondrial intermembrane side. Residues 15-45 (PIMEELLHFHDHTLMIVFLISSLVLYIISLM) traverse the membrane as a helical segment. The Mitochondrial matrix segment spans residues 46–59 (LTTKLTHTSTMDAQ). Residues 60-87 (EVETIWTILPAIILILIALPSLRILYMM) traverse the membrane as a helical segment. The Mitochondrial intermembrane segment spans residues 88–227 (DEINDPSLTV…HFENWSSSML (140 aa)). Positions 161, 196, 198, 200, 204, and 207 each coordinate Cu cation. Mg(2+) is bound at residue Glu-198.

Belongs to the cytochrome c oxidase subunit 2 family. As to quaternary structure, component of the cytochrome c oxidase (complex IV, CIV), a multisubunit enzyme composed of 14 subunits. The complex is composed of a catalytic core of 3 subunits MT-CO1, MT-CO2 and MT-CO3, encoded in the mitochondrial DNA, and 11 supernumerary subunits COX4I, COX5A, COX5B, COX6A, COX6B, COX6C, COX7A, COX7B, COX7C, COX8 and NDUFA4, which are encoded in the nuclear genome. The complex exists as a monomer or a dimer and forms supercomplexes (SCs) in the inner mitochondrial membrane with NADH-ubiquinone oxidoreductase (complex I, CI) and ubiquinol-cytochrome c oxidoreductase (cytochrome b-c1 complex, complex III, CIII), resulting in different assemblies (supercomplex SCI(1)III(2)IV(1) and megacomplex MCI(2)III(2)IV(2)). Found in a complex with TMEM177, COA6, COX18, COX20, SCO1 and SCO2. Interacts with TMEM177 in a COX20-dependent manner. Interacts with COX20. Interacts with COX16. Cu cation is required as a cofactor.

The protein resides in the mitochondrion inner membrane. The enzyme catalyses 4 Fe(II)-[cytochrome c] + O2 + 8 H(+)(in) = 4 Fe(III)-[cytochrome c] + 2 H2O + 4 H(+)(out). Component of the cytochrome c oxidase, the last enzyme in the mitochondrial electron transport chain which drives oxidative phosphorylation. The respiratory chain contains 3 multisubunit complexes succinate dehydrogenase (complex II, CII), ubiquinol-cytochrome c oxidoreductase (cytochrome b-c1 complex, complex III, CIII) and cytochrome c oxidase (complex IV, CIV), that cooperate to transfer electrons derived from NADH and succinate to molecular oxygen, creating an electrochemical gradient over the inner membrane that drives transmembrane transport and the ATP synthase. Cytochrome c oxidase is the component of the respiratory chain that catalyzes the reduction of oxygen to water. Electrons originating from reduced cytochrome c in the intermembrane space (IMS) are transferred via the dinuclear copper A center (CU(A)) of subunit 2 and heme A of subunit 1 to the active site in subunit 1, a binuclear center (BNC) formed by heme A3 and copper B (CU(B)). The BNC reduces molecular oxygen to 2 water molecules using 4 electrons from cytochrome c in the IMS and 4 protons from the mitochondrial matrix. The protein is Cytochrome c oxidase subunit 2 (MT-CO2) of Tamias amoenus (Yellow-pine chipmunk).